A 411-amino-acid polypeptide reads, in one-letter code: LL-diaminopimelate aminotransferase (411 aa).

The substrate site is built by Y15 and G42. Pyridoxal 5'-phosphate-binding positions include Y72, S108–K109, Y132, N187, Y218, and S246–S248. Substrate is bound by residues K109, Y132, and N187. K249 carries the post-translational modification N6-(pyridoxal phosphate)lysine. 2 residues coordinate pyridoxal 5'-phosphate: R257 and N292. Substrate-binding residues include N292 and R388.

The protein belongs to the class-I pyridoxal-phosphate-dependent aminotransferase family. LL-diaminopimelate aminotransferase subfamily. In terms of assembly, homodimer. Pyridoxal 5'-phosphate serves as cofactor.

It carries out the reaction (2S,6S)-2,6-diaminopimelate + 2-oxoglutarate = (S)-2,3,4,5-tetrahydrodipicolinate + L-glutamate + H2O + H(+). It participates in amino-acid biosynthesis; L-lysine biosynthesis via DAP pathway; LL-2,6-diaminopimelate from (S)-tetrahydrodipicolinate (aminotransferase route): step 1/1. Its function is as follows. Involved in the synthesis of meso-diaminopimelate (m-DAP or DL-DAP), required for both lysine and peptidoglycan biosynthesis. Catalyzes the direct conversion of tetrahydrodipicolinate to LL-diaminopimelate. The polypeptide is LL-diaminopimelate aminotransferase (Geobacter sp. (strain M21)).